Reading from the N-terminus, the 293-residue chain is Ribosomal protein L11 methyltransferase (293 aa).

Residues Thr145, Gly166, Asp188, and Asn230 each coordinate S-adenosyl-L-methionine.

It belongs to the methyltransferase superfamily. PrmA family.

Its subcellular location is the cytoplasm. It catalyses the reaction L-lysyl-[protein] + 3 S-adenosyl-L-methionine = N(6),N(6),N(6)-trimethyl-L-lysyl-[protein] + 3 S-adenosyl-L-homocysteine + 3 H(+). In terms of biological role, methylates ribosomal protein L11. In Klebsiella pneumoniae (strain 342), this protein is Ribosomal protein L11 methyltransferase.